The primary structure comprises 378 residues: Peptide chain release factor RF2 (378 aa).

At Gln-253 the chain carries N5-methylglutamine.

The protein belongs to the prokaryotic/mitochondrial release factor family. In terms of assembly, interacts with the ribosome. Interacts with ribosomal protein L11. Recruited to stalled E.coli ribosomes by E.coli ArfA.

It is found in the cytoplasm. In terms of biological role, peptide chain release factor 2 directs the termination of translation in response to the peptide chain termination codons UGA and UAA. In endogenous ribosomes interacts with P-site tRNA and 23S rRNA. In the presence of truncated mRNA in the 70S ribosome, ArfA and RF2 interact such that the GGQ peptide hydrolysis motif of RF2 rises into the peptidyl-transferase center and releases the ribosome. Recruited to stalled E.coli 70S ribosomes by E.coli ArfA, but cannot be functionally accomodated in the peptidyl-transferase center. Note T.thermophilus probably does not encode arfA. In Thermus thermophilus (strain ATCC 27634 / DSM 579 / HB8), this protein is Peptide chain release factor RF2 (prfB).